A 515-amino-acid chain; its full sequence is 1-pyrroline-5-carboxylate dehydrogenase (515 aa).

Catalysis depends on residues Glu-286 and Cys-320.

The protein belongs to the aldehyde dehydrogenase family. RocA subfamily.

The catalysed reaction is L-glutamate 5-semialdehyde + NAD(+) + H2O = L-glutamate + NADH + 2 H(+). It participates in amino-acid degradation; L-proline degradation into L-glutamate; L-glutamate from L-proline: step 2/2. The chain is 1-pyrroline-5-carboxylate dehydrogenase from Bacillus cereus (strain ATCC 10987 / NRS 248).